We begin with the raw amino-acid sequence, 471 residues long: Protein translocase subunit SecF (471 aa).

The disordered stretch occupies residues 1 to 29 (MVSRAKVGAETTKGIDEPDRNDNTDDNGA). The segment covering 13–23 (KGIDEPDRNDN) has biased composition (basic and acidic residues). The next 6 helical transmembrane spans lie at 88-108 (GGVI…TFGI), 211-231 (ITKK…LYIT), 242-262 (ALTT…LVGF), 267-287 (ATVI…VIVF), 325-345 (LISV…LGVG), and 355-375 (LVGI…LLVT). The segment at 393 to 471 (RRTLGSQVGK…TGKRNNVGRR (79 aa)) is disordered. The span at 415 to 431 (KPQNQAESCADASSQEG) shows a compositional bias: polar residues. Residues 448-460 (PGVRPVRPTGTRR) show a composition bias toward low complexity. Positions 461–471 (PTGKRNNVGRR) are enriched in basic residues.

Belongs to the SecD/SecF family. SecF subfamily. Forms a complex with SecD. Part of the essential Sec protein translocation apparatus which comprises SecA, SecYEG and auxiliary proteins SecDF. Other proteins may also be involved.

The protein localises to the cell membrane. Part of the Sec protein translocase complex. Interacts with the SecYEG preprotein conducting channel. SecDF uses the proton motive force (PMF) to complete protein translocation after the ATP-dependent function of SecA. In Mycobacterium leprae (strain TN), this protein is Protein translocase subunit SecF.